The sequence spans 355 residues: WAT1-related protein At3g28130 (355 aa).

Transmembrane regions (helical) follow at residues 11–31 (AVLLTAMLATETGNVAMNTLF), 42–62 (YTFLIYSYLIGSIVLLPSHIF), 80–100 (IGVLGLLGSTYLITGFIGIEY), 104–124 (TLASAISNINPAITFILAIIF), 136–156 (SVAKMVGTIVSLVGALVVVLY), 186–206 (WIIGGCLLAIKDTLVPVAFIL), 218–238 (FTVSFFYFLIASILTSLIGIV), 244–264 (PSIWIIHFDITLVCIVVGGIF), 290–310 (LSILIAVIMGAIFLGDSFYLG), and 311–331 (SLVGGILISLGFYTVMWGKAK). One can recognise an EamA domain in the interval 29-154 (TLFKAATSKG…VSLVGALVVV (126 aa)).

Belongs to the drug/metabolite transporter (DMT) superfamily. Plant drug/metabolite exporter (P-DME) (TC 2.A.7.4) family.

The protein resides in the membrane. The sequence is that of WAT1-related protein At3g28130 from Arabidopsis thaliana (Mouse-ear cress).